A 645-amino-acid chain; its full sequence is Transcription factor AN6788 (645 aa).

Positions 1–21 are disordered; sequence MPQKAQPQPRESPFKPARQQP. Positions 25–52 form a DNA-binding region, zn(2)-C6 fungal-type; the sequence is CEECRKRKARCDRAKPQCGSCMMTGRVC. Over residues 113 to 131 the composition is skewed to basic and acidic residues; that stretch reads PDFEPNSHPRHSQSHDRRQ. The interval 113 to 170 is disordered; sequence PDFEPNSHPRHSQSHDRRQQSGPDSSPDTQHELPFLQSPPAARDADSAERALLPSPVS.

It is found in the nucleus. In terms of biological role, transcription factors AN6788 and AN6790 act in tandem to regulate the expression of the non-reducing polyketide synthase pkfA from the aspernidine A biosynthesis cluster. They do not control the expression of the other genes involved in aspernidine A biosynthesis, nor do they regulate the expression of the highly reducing polyketide synthase AN6791 and the esterase AN6793 with which they are predicted to form a secondary metabolite biosynthesis cluster. This is Transcription factor AN6788 from Emericella nidulans (strain FGSC A4 / ATCC 38163 / CBS 112.46 / NRRL 194 / M139) (Aspergillus nidulans).